Consider the following 369-residue polypeptide: tRNA(Met) cytidine acetate ligase (369 aa).

ATP is bound by residues 7 to 20 (VAEFNPFHNGHKYL), Gly96, Asn152, and Arg175.

It belongs to the TmcAL family.

The protein localises to the cytoplasm. The enzyme catalyses cytidine(34) in elongator tRNA(Met) + acetate + ATP = N(4)-acetylcytidine(34) in elongator tRNA(Met) + AMP + diphosphate. Its function is as follows. Catalyzes the formation of N(4)-acetylcytidine (ac(4)C) at the wobble position of elongator tRNA(Met), using acetate and ATP as substrates. First activates an acetate ion to form acetyladenylate (Ac-AMP) and then transfers the acetyl group to tRNA to form ac(4)C34. This Streptococcus agalactiae serotype III (strain NEM316) protein is tRNA(Met) cytidine acetate ligase.